The primary structure comprises 171 residues: KRAB domain-containing protein 4 (171 aa).

Residues 8–79 (LTFKDVFVDF…DGGTPVRTCA (72 aa)) form the KRAB domain.

As to expression, expressed in brain, ovary, testis, prostate, tonsil, heart, bone marrow, colon, breast and kidney.

The protein is KRAB domain-containing protein 4 (KRBOX4) of Homo sapiens (Human).